The primary structure comprises 173 residues: Streptothricin acetyltransferase A (173 aa).

One can recognise an N-acetyltransferase domain in the interval 21–173 (VVFGRMIPAF…EIAIFWYYKF (153 aa)).

This sequence belongs to the acetyltransferase family. GNAT subfamily. As to quaternary structure, homodimer.

It catalyses the reaction streptothricin D + acetyl-CoA = N(beta)-acetylstreptothricin D + CoA + H(+). The catalysed reaction is streptothricin F + acetyl-CoA = N(beta)-acetylstreptothricin F + CoA + H(+). Its function is as follows. Involved in resistance to streptothricin, a broad-spectrum antibiotic produced by streptomycetes. Detoxifies streptothricin via acetylation of the beta amino group of the first beta-lysyl moiety of streptothricin. The chain is Streptothricin acetyltransferase A from Bacillus subtilis (strain 168).